The sequence spans 161 residues: MGAKDYIGSLFLTELIKGLALTGRHLFARKITVQFPEEKTPASPRFRGLHALRRYPNGEERCIACKLCEAVCPALAITIESEQRDDGSRRTKRYDIDLTKCIFCGFCEEACPVDAVVETRVMEYHGEKRGDLYYTKQMLLAVGDRYEAQIAADREADAKYR.

4Fe-4S ferredoxin-type domains lie at 52 to 82 (LRRYPNGEERCIACKLCEAVCPALAITIESE) and 92 to 121 (KRYDIDLTKCIFCGFCEEACPVDAVVETRV). Cys-62, Cys-65, Cys-68, Cys-72, Cys-101, Cys-104, Cys-107, and Cys-111 together coordinate [4Fe-4S] cluster.

Belongs to the complex I 23 kDa subunit family. As to quaternary structure, NDH-1 is composed of 14 different subunits. Subunits NuoA, H, J, K, L, M, N constitute the membrane sector of the complex. [4Fe-4S] cluster serves as cofactor.

The protein resides in the cell inner membrane. It catalyses the reaction a quinone + NADH + 5 H(+)(in) = a quinol + NAD(+) + 4 H(+)(out). Functionally, NDH-1 shuttles electrons from NADH, via FMN and iron-sulfur (Fe-S) centers, to quinones in the respiratory chain. The immediate electron acceptor for the enzyme in this species is believed to be ubiquinone. Couples the redox reaction to proton translocation (for every two electrons transferred, four hydrogen ions are translocated across the cytoplasmic membrane), and thus conserves the redox energy in a proton gradient. The polypeptide is NADH-quinone oxidoreductase subunit I (Aromatoleum aromaticum (strain DSM 19018 / LMG 30748 / EbN1) (Azoarcus sp. (strain EbN1))).